Reading from the N-terminus, the 83-residue chain is uncharacterized protein (83 aa).

It localises to the plastid. Its subcellular location is the chloroplast. This is an uncharacterized protein from Pinus thunbergii (Japanese black pine).